Consider the following 157-residue polypeptide: MAKVESFTLDHTKVKAPYVRLITVEEGPKGDKISNYDLRLVQPNENAIPTGGLHTIEHLLASLLRDRLDGVIDCSPFGCRTGFHLIVWGEHSTTEVAKALKSSLEEIRDTITWEDVPGTTIKTCGNYRDHSLFTAKEWCRDILEKGISDDPFERNVI.

Fe cation contacts are provided by histidine 54, histidine 58, and cysteine 124.

It belongs to the LuxS family. In terms of assembly, homodimer. Fe cation is required as a cofactor.

It carries out the reaction S-(5-deoxy-D-ribos-5-yl)-L-homocysteine = (S)-4,5-dihydroxypentane-2,3-dione + L-homocysteine. Its function is as follows. Involved in the synthesis of autoinducer 2 (AI-2) which is secreted by bacteria and is used to communicate both the cell density and the metabolic potential of the environment. The regulation of gene expression in response to changes in cell density is called quorum sensing. Catalyzes the transformation of S-ribosylhomocysteine (RHC) to homocysteine (HC) and 4,5-dihydroxy-2,3-pentadione (DPD). In Lactobacillus acidophilus (strain ATCC 700396 / NCK56 / N2 / NCFM), this protein is S-ribosylhomocysteine lyase.